The chain runs to 308 residues: Glutaminase (308 aa).

7 residues coordinate substrate: Ser-66, Asn-117, Glu-162, Asn-169, Tyr-193, Tyr-244, and Val-262.

It belongs to the glutaminase family. In terms of assembly, homotetramer.

It carries out the reaction L-glutamine + H2O = L-glutamate + NH4(+). The sequence is that of Glutaminase from Natranaerobius thermophilus (strain ATCC BAA-1301 / DSM 18059 / JW/NM-WN-LF).